We begin with the raw amino-acid sequence, 421 residues long: Probable acid phosphatase (421 aa).

Residue Asp229 is the Proton donor of the active site.

It carries out the reaction a phosphate monoester + H2O = an alcohol + phosphate. The chain is Probable acid phosphatase from Kluyveromyces lactis (strain ATCC 8585 / CBS 2359 / DSM 70799 / NBRC 1267 / NRRL Y-1140 / WM37) (Yeast).